A 290-amino-acid polypeptide reads, in one-letter code: Eukaryotic translation initiation factor 3 subunit F-2 (290 aa).

Residues 12–150 (VRLQPLVLFQ…TRLYCAVTMG (139 aa)) form the MPN domain.

The protein belongs to the eIF-3 subunit F family. Component of the eukaryotic translation initiation factor 3 (eIF-3) complex. The eIF-3 complex interacts with pix.

Its subcellular location is the cytoplasm. In terms of biological role, component of the eukaryotic translation initiation factor 3 (eIF-3) complex, which is involved in protein synthesis of a specialized repertoire of mRNAs and, together with other initiation factors, stimulates binding of mRNA and methionyl-tRNAi to the 40S ribosome. The eIF-3 complex specifically targets and initiates translation of a subset of mRNAs involved in cell proliferation. This chain is Eukaryotic translation initiation factor 3 subunit F-2, found in Drosophila mojavensis (Fruit fly).